The following is a 198-amino-acid chain: Ribosome maturation factor RimP (198 aa).

Belongs to the RimP family.

It is found in the cytoplasm. Required for maturation of 30S ribosomal subunits. This is Ribosome maturation factor RimP from Rhizobium rhizogenes (strain K84 / ATCC BAA-868) (Agrobacterium radiobacter).